Consider the following 88-residue polypeptide: Small ribosomal subunit protein uS19 (88 aa).

This sequence belongs to the universal ribosomal protein uS19 family.

Functionally, protein S19 forms a complex with S13 that binds strongly to the 16S ribosomal RNA. In Mycoplasma capricolum subsp. capricolum (strain California kid / ATCC 27343 / NCTC 10154), this protein is Small ribosomal subunit protein uS19 (rpsS).